The chain runs to 206 residues: Regulator of rDNA transcription protein 14 (206 aa).

A disordered region spans residues 178–206 (FVKDHRYPGLTPGLAPVGLSDEEDSSEED). Residues S197, S202, and S203 each carry the phosphoserine modification. Positions 197–206 (SDEEDSSEED) are enriched in acidic residues.

It belongs to the RRT14 family.

It localises to the nucleus. Its subcellular location is the nucleolus. Involved in ribosome biogenesis, probably through modulation of rDNA transcription. The polypeptide is Regulator of rDNA transcription protein 14 (RRT14) (Saccharomyces cerevisiae (strain ATCC 204508 / S288c) (Baker's yeast)).